The primary structure comprises 240 residues: Uridylate kinase (240 aa).

13 to 16 (KASG) contacts ATP. Residues 21–26 (GSQGFG) form an involved in allosteric activation by GTP region. Gly55 provides a ligand contact to UMP. Residues Gly56 and Arg60 each coordinate ATP. Residues Asp75 and 136 to 143 (TGNPFFTT) each bind UMP. Thr163, Gln164, Tyr169, and Asp172 together coordinate ATP.

Belongs to the UMP kinase family. As to quaternary structure, homohexamer.

Its subcellular location is the cytoplasm. It carries out the reaction UMP + ATP = UDP + ADP. The protein operates within pyrimidine metabolism; CTP biosynthesis via de novo pathway; UDP from UMP (UMPK route): step 1/1. Its activity is regulated as follows. Allosterically activated by GTP. Inhibited by UTP. Catalyzes the reversible phosphorylation of UMP to UDP. This chain is Uridylate kinase, found in Sinorhizobium medicae (strain WSM419) (Ensifer medicae).